We begin with the raw amino-acid sequence, 90 residues long: Probable Fe(2+)-trafficking protein (90 aa).

The protein belongs to the Fe(2+)-trafficking protein family.

Its function is as follows. Could be a mediator in iron transactions between iron acquisition and iron-requiring processes, such as synthesis and/or repair of Fe-S clusters in biosynthetic enzymes. In Coxiella burnetii (strain CbuK_Q154) (Coxiella burnetii (strain Q154)), this protein is Probable Fe(2+)-trafficking protein.